The following is a 248-amino-acid chain: ATP synthase subunit a (248 aa).

The next 6 helical transmembrane spans lie at T34–G54, Y91–L111, I121–V141, F147–I167, V196–A216, and L220–L240.

Belongs to the ATPase A chain family. In terms of assembly, F-type ATPases have 2 components, CF(1) - the catalytic core - and CF(0) - the membrane proton channel. CF(1) has five subunits: alpha(3), beta(3), gamma(1), delta(1), epsilon(1). CF(0) has three main subunits: a(1), b(2) and c(9-12). The alpha and beta chains form an alternating ring which encloses part of the gamma chain. CF(1) is attached to CF(0) by a central stalk formed by the gamma and epsilon chains, while a peripheral stalk is formed by the delta and b chains.

It localises to the cell inner membrane. Key component of the proton channel; it plays a direct role in the translocation of protons across the membrane. This is ATP synthase subunit a from Paracoccus denitrificans (strain Pd 1222).